A 188-amino-acid chain; its full sequence is Zinc finger protein 428 (188 aa).

Residues 1–162 (MTETREPAET…EEEEEEGTYH (162 aa)) are disordered. The span at 40–61 (PDSEEEEDEEEEEEETTDDPEY) shows a compositional bias: acidic residues. Residues 84-94 (RAAQPPAQPCQ) show a composition bias toward low complexity. Thr108 carries the post-translational modification Phosphothreonine. Over residues 116 to 129 (PATAPQEAPAPEGR) the composition is skewed to low complexity. Residues 138–149 (PPRAGEGRPAGR) are compositionally biased toward basic and acidic residues. The segment at 161-183 (YHCTECEDSFDNLGELHGHFMLH) adopts a C2H2-type zinc-finger fold.

This Homo sapiens (Human) protein is Zinc finger protein 428 (ZNF428).